The primary structure comprises 55 residues: Protein CADMIUM TOLERANCE 1 (55 aa).

A helical transmembrane segment spans residues 24 to 40 (GCLYACIFTALCCFCCY).

Belongs to the CYSTM1 family. Expressed in roots and shoots.

The protein resides in the cell membrane. The protein localises to the secreted. It localises to the cell wall. Its function is as follows. Confers resistance to heavy metal ions (e.g. cadmium (CdCl(2)) and copper (CuCl(2))) by chelating them at the plasma membrane of root cells, thus stopping their entry and reducing their accumulation. Binds to aluminium (Al). This chain is Protein CADMIUM TOLERANCE 1, found in Oryza sativa subsp. japonica (Rice).